A 1006-amino-acid chain; its full sequence is Phosphatidylinositol-3,5-bisphosphate 3-phosphatase MTMR3 (1006 aa).

Positions 1–10 (MTVTSSAAID) are enriched in low complexity. Positions 1–29 (MTVTSSAAIDIGGGGGGRRSDRLDSDRTS) are disordered. Residues 18-29 (RRSDRLDSDRTS) are compositionally biased toward basic and acidic residues. The Myotubularin phosphatase domain maps to 224–630 (AWKFSEAVDE…INLRVWHEVF (407 aa)). Residues asparagine 377, asparagine 402, and isoleucine 403 each coordinate a 1,2-diacyl-sn-glycero-3-phospho-(1D-myo-inositol-3,5-bisphosphate). The a 1,2-diacyl-sn-glycero-3-phospho-(1D-myo-inositol-3-phosphate) site is built by asparagine 377, asparagine 402, and isoleucine 403. Cysteine 463 functions as the Phosphocysteine intermediate in the catalytic mechanism. A 1,2-diacyl-sn-glycero-3-phospho-(1D-myo-inositol-3,5-bisphosphate) is bound by residues serine 464, aspartate 465, glycine 466, tryptophan 467, aspartate 468, arginine 469, lysine 505, and arginine 509. Serine 464, aspartate 465, glycine 466, tryptophan 467, aspartate 468, and arginine 469 together coordinate a 1,2-diacyl-sn-glycero-3-phospho-(1D-myo-inositol-3-phosphate). Residue arginine 509 coordinates a 1,2-diacyl-sn-glycero-3-phospho-(1D-myo-inositol-3-phosphate). The tract at residues 641 to 705 (FSPKEERPLS…PSDNTNSLPM (65 aa)) is disordered. Residues 651-705 (GCTTPMNTSTSTNLVKSKSSESINSLNVDGSAKESSQQHPTCSTTPSDNTNSLPM) are compositionally biased toward polar residues. An FYVE-type zinc finger spans residues 818–883 (EGESGHCAYC…ACDSCYDSMH (66 aa)). Zn(2+) is bound by residues cysteine 824, cysteine 827, cysteine 845, cysteine 848, cysteine 853, cysteine 856, cysteine 875, and cysteine 878. The disordered stretch occupies residues 886–1006 (DLKLSSSSTT…DVLDVNEQPL (121 aa)). Low complexity-rich tracts occupy residues 890-901 (SSSSTTTTSSST) and 913-926 (DNNSDNVSENVSEN). 2 stretches are compositionally biased toward basic and acidic residues: residues 933–954 (VEEKEAEDPIKEAESPSKETKC) and 976–985 (HSRDPLKSID).

Belongs to the protein-tyrosine phosphatase family. Non-receptor class myotubularin subfamily. As to expression, expressed in the body wall muscle and in eggs. Expressed in head neurons. Expressed in the intestine. Expressed in pharyngeal cells, vulval muscle cells and cells of the tail region.

Its subcellular location is the cytoplasm. It localises to the membrane. The catalysed reaction is a 1,2-diacyl-sn-glycero-3-phospho-(1D-myo-inositol-3,5-bisphosphate) + H2O = a 1,2-diacyl-sn-glycero-3-phospho-(1D-myo-inositol-5-phosphate) + phosphate. It carries out the reaction a 1,2-diacyl-sn-glycero-3-phospho-(1D-myo-inositol-3-phosphate) + H2O = a 1,2-diacyl-sn-glycero-3-phospho-(1D-myo-inositol) + phosphate. It catalyses the reaction 1,2-dihexadecanoyl-sn-glycero-3-phospho-(1D-myo-inositol-3-phosphate) + H2O = 1,2-dihexadecanoyl-sn-glycero-3-phospho-(1D-myo-inositol) + phosphate. The enzyme catalyses 1,2-dihexadecanoyl-sn-glycero-3-phospho-(1D-myo-inositol-3,5-phosphate) + H2O = 1,2-dihexadecanoyl-sn-glycero-3-phospho-(1D-myo-inositol-5-phosphate) + phosphate. The catalysed reaction is 1,2-dioctanoyl-sn-glycero-3-phospho-(1-D-myo-inositol-3-phosphate) + H2O = 1,2-dioctanoyl-sn-glycero-3-phospho-(1D-myo-inositol) + phosphate. Inhibited by sodium vanadate and peroxide. Preferentially dephosphorylates phosphatidylinositol 3-phosphate (PI3P), and has some activity towards phosphatidylinositol 3,5-bisphosphate (PI35P). Positively regulates autophagy and is recruited to autophagosomes by PI3P where it catalyzes PI3P turnover to promote autophagosome maturation. Thought to have a role in maintenance of muscle function. Involved in locomotion and lifespan determination. In Caenorhabditis elegans, this protein is Phosphatidylinositol-3,5-bisphosphate 3-phosphatase MTMR3.